We begin with the raw amino-acid sequence, 276 residues long: Rhomboid protease GlpG (276 aa).

Helical transmembrane passes span 94–114 (GPVT…MQIL), 142–162 (ALMH…WYLG), 169–189 (LGSG…GYVQ), 192–212 (FSGP…GYVW), 229–249 (LIIF…GMSM), and 250–270 (ANGA…VDSL). The Nucleophile role is filled by Ser201. His254 is an active-site residue.

The protein belongs to the peptidase S54 family.

It is found in the cell inner membrane. It catalyses the reaction Cleaves type-1 transmembrane domains using a catalytic dyad composed of serine and histidine that are contributed by different transmembrane domains.. Its function is as follows. Rhomboid-type serine protease that catalyzes intramembrane proteolysis. In Shigella boydii serotype 4 (strain Sb227), this protein is Rhomboid protease GlpG.